The following is a 777-amino-acid chain: Aminopeptidase P (777 aa).

The first 17 residues, 1-17 (MQLNFLLFVFIFLMVFH), serve as a signal peptide directing secretion. His551 is a binding site for substrate. The Mn(2+) site is built by Asp570 and Asp581. His640 is a substrate binding site. Mn(2+) is bound at residue His644. Residue His653 participates in substrate binding. Positions 676 and 690 each coordinate Mn(2+).

It belongs to the peptidase M24B family. Homodimer. It depends on Mn(2+) as a cofactor. In terms of processing, the N-terminus may be proteolytically cleaved to generate a 73-kDa mature form.

It is found in the vacuole lumen. Its subcellular location is the cytoplasm. The catalysed reaction is Release of any N-terminal amino acid, including proline, that is linked to proline, even from a dipeptide or tripeptide.. Partially activated by Co(2+) and Mg(2+) has no effect. Inhibited by 1 mM Zn(2+), Ni(2+), or Cu(2+). Inhibited by apstatin, a non-hydrolysable peptide analog. Functionally, catalyzes the removal of a penultimate prolyl residue from the N-termini of peptides. In the food vacuole, involved in the final step of host hemoglobin catabolism, by cleaving hemoglobin-derived oligopeptides. In the cytoplasm, may be involved in the last steps of the turnover of ubiquitinated proteins. This is Aminopeptidase P from Plasmodium falciparum (isolate 3D7).